Reading from the N-terminus, the 443-residue chain is Amino-acid acetyltransferase (443 aa).

The 148-residue stretch at 296 to 443 (EQIRRATIND…RSKVLMADLG (148 aa)) folds into the N-acetyltransferase domain.

Belongs to the acetyltransferase family. ArgA subfamily. In terms of assembly, homohexamer.

It is found in the cytoplasm. The enzyme catalyses L-glutamate + acetyl-CoA = N-acetyl-L-glutamate + CoA + H(+). It functions in the pathway amino-acid biosynthesis; L-arginine biosynthesis; N(2)-acetyl-L-ornithine from L-glutamate: step 1/4. The polypeptide is Amino-acid acetyltransferase (argA) (Salmonella typhi).